The sequence spans 429 residues: Acetyltransferase pyr8 (429 aa).

The next 9 membrane-spanning stretches (helical) occupy residues 12–32 (IAQE…VIIT), 39–56 (LRLA…RFSL), 69–89 (GVAA…LLIT), 154–174 (YVLR…LIHM), 221–241 (VCLN…RISA), 300–320 (IFFT…ILGI), 324–344 (GSGA…EDGV), 365–385 (LVGF…YLYP), and 409–429 (VAQK…GGEI).

The protein belongs to the wax synthase family.

The protein localises to the membrane. The protein operates within secondary metabolite biosynthesis; terpenoid biosynthesis. In terms of biological role, acetyltransferase; part of the gene cluster that mediates the biosynthesis of pyripyropene A, a specific human acyl-coenzyme A:cholesterol acyltransferase 2 inhibitor. The first step of the pathway is the synthesis of nicotinyl-CoA from nicotinic acid by the nicotinic acid-CoA ligase pyr1. Nicotinyl-CoA is then a substrate of polyketide synthase pyr2 to produce 4-hydroxy-6-(3-pyridinyl)-2H-pyran-2-one (HPPO) which is further prenylated by the polyprenyl transferase pyr6 to yield farnesyl-HPPO. The next steps consist of an epoxidation of farnesyl-HPPO to epoxyfarnesyl-HPPO by FAD-dependent monooxygenase pyr5 and a cyclization of the terpenoid portion by the terpene cyclase pyr4 to yield deacetyl-pyripyropene E. The 2 cytochrome P450 monooxygenases pyr3 and pyr9, and the 2 acetyltransferases pyr7 and pyr8 are involved in the conversion of deacetyl-pyripyropene E into pyripyropene A through several cycles of oxidation and acetylation steps. Pyr7 acetylates deacetyl-pyripyropene E to pyripyropene E which is oxidized to 11-deacetyl-pyripyropene O by pyr3, which is in turn acetylated into pyripyropene O by pyr8. Pyripyropene O is then oxidized to deacetyl-pyripyropene A by pyr9. Deacetyl-pyripyropene A is finally acetylated to pyripyropene A by pyr8. This is Acetyltransferase pyr8 from Aspergillus fumigatus (strain ATCC MYA-4609 / CBS 101355 / FGSC A1100 / Af293) (Neosartorya fumigata).